An 820-amino-acid chain; its full sequence is Probable ATP-dependent RNA helicase DDX23 (820 aa).

A compositionally biased stretch (basic and acidic residues) spans 1-42 (MAGELADKKDRDASPSKEERKRSRTPDRERDRDRDRKSSPSK). A disordered region spans residues 1 to 244 (MAGELADKKD…QKIREEKDKS (244 aa)). A phosphoserine mark is found at serine 14 and serine 16. Basic residues predominate over residues 43 to 65 (DRKRHRSRDRRRGGSRSRSRSRS). The segment covering 66-105 (KSAERERRHKERERDKERDRNKKDRDRDKDGHRRDKDRKR) has biased composition (basic and acidic residues). Serine 107 and serine 109 each carry phosphoserine. 3 stretches are compositionally biased toward basic and acidic residues: residues 112 to 137 (RGKDFKSRKDRDSKKDEEDEHGDKKP), 147 to 226 (LLAK…RETN), and 233 to 244 (GRQKIREEKDKS). The Q motif signature appears at 391–419 (RSWKDSSLPPHILEVIDKCGYKEPTPIQR). Residues 422–627 (IPIGLQNRDI…RSYLRRPAVV (206 aa)) form the Helicase ATP-binding domain. 435–442 (AETGSGKT) contacts ATP. The DEAD box signature appears at 549 to 552 (DEAD). The region spanning 651-799 (KRKKLLAILE…SCPPELANHP (149 aa)) is the Helicase C-terminal domain. Glycyl lysine isopeptide (Lys-Gly) (interchain with G-Cter in SUMO2) cross-links involve residues lysine 686 and lysine 811.

It belongs to the DEAD box helicase family. DDX23/PRP28 subfamily. The phosphorylated form (by SRPK2) is a component of the U4/U6-U5 tri-snRNP complex composed of the U4, U6 and U5 snRNAs and at least PRPF3, PRPF4, PRPF6, PRPF8, PRPF31, SNRNP200, TXNL4A, WDR57, SNRNP40, DDX23, CD2BP2, PPIH, SNU13, EFTUD2, SART1 and USP39. Identified in the spliceosome C complex. Interacts with ERBB4. Interacts with ERCC6. In terms of processing, in vitro phosphorylated by CLK1 and U1 snRNP-associated protein kinase. Phosphorylated by SRPK2 and this phosphorylation is required for its association with the tri-snRNP (U4/U6-U5 tri-small nuclear ribonucleoproteins) and subsequent spliceosomal B complex formation. May be phosphorylated by SRPK2 on Ser residues in the SR domain; the phosphorylation is required for the removal of inappropriate R-loops during transcription.

It is found in the nucleus. It localises to the chromosome. The enzyme catalyses ATP + H2O = ADP + phosphate + H(+). Functionally, involved in pre-mRNA splicing and its phosphorylated form (by SRPK2) is required for spliceosomal B complex formation. Independently of its spliceosome formation function, required for the suppression of incorrect R-loops formed during transcription; R-loops are composed of a DNA:RNA hybrid and the associated non-template single-stranded DNA. The protein is Probable ATP-dependent RNA helicase DDX23 of Pongo abelii (Sumatran orangutan).